Here is a 446-residue protein sequence, read N- to C-terminus: Bifunctional protein GlmU (446 aa).

Residues 1-229 (MTEKPVALIV…EAETLGINTR (229 aa)) form a pyrophosphorylase region. UDP-N-acetyl-alpha-D-glucosamine-binding positions include 11–14 (LAAG), lysine 25, glutamine 78, 83–84 (GT), 106–108 (YGD), glycine 141, glutamate 155, asparagine 170, and asparagine 227. Aspartate 108 is a binding site for Mg(2+). A Mg(2+)-binding site is contributed by asparagine 227. A linker region spans residues 230–250 (AELAAAEAAFQVRARARALED). The segment at 251–446 (GVTMTDPATV…MQALRQKKGN (196 aa)) is N-acetyltransferase. UDP-N-acetyl-alpha-D-glucosamine-binding residues include arginine 316 and lysine 334. The active-site Proton acceptor is histidine 346. The UDP-N-acetyl-alpha-D-glucosamine site is built by tyrosine 349 and asparagine 360. Acetyl-CoA-binding positions include alanine 363, 369–370 (NY), serine 388, serine 406, and arginine 423.

This sequence in the N-terminal section; belongs to the N-acetylglucosamine-1-phosphate uridyltransferase family. In the C-terminal section; belongs to the transferase hexapeptide repeat family. In terms of assembly, homotrimer. Mg(2+) serves as cofactor.

Its subcellular location is the cytoplasm. The enzyme catalyses alpha-D-glucosamine 1-phosphate + acetyl-CoA = N-acetyl-alpha-D-glucosamine 1-phosphate + CoA + H(+). It carries out the reaction N-acetyl-alpha-D-glucosamine 1-phosphate + UTP + H(+) = UDP-N-acetyl-alpha-D-glucosamine + diphosphate. Its pathway is nucleotide-sugar biosynthesis; UDP-N-acetyl-alpha-D-glucosamine biosynthesis; N-acetyl-alpha-D-glucosamine 1-phosphate from alpha-D-glucosamine 6-phosphate (route II): step 2/2. It functions in the pathway nucleotide-sugar biosynthesis; UDP-N-acetyl-alpha-D-glucosamine biosynthesis; UDP-N-acetyl-alpha-D-glucosamine from N-acetyl-alpha-D-glucosamine 1-phosphate: step 1/1. The protein operates within bacterial outer membrane biogenesis; LPS lipid A biosynthesis. Its function is as follows. Catalyzes the last two sequential reactions in the de novo biosynthetic pathway for UDP-N-acetylglucosamine (UDP-GlcNAc). The C-terminal domain catalyzes the transfer of acetyl group from acetyl coenzyme A to glucosamine-1-phosphate (GlcN-1-P) to produce N-acetylglucosamine-1-phosphate (GlcNAc-1-P), which is converted into UDP-GlcNAc by the transfer of uridine 5-monophosphate (from uridine 5-triphosphate), a reaction catalyzed by the N-terminal domain. The protein is Bifunctional protein GlmU of Paracoccus denitrificans (strain Pd 1222).